A 501-amino-acid chain; its full sequence is Ribose import ATP-binding protein RbsA (501 aa).

ABC transporter domains are found at residues 5–241 and 249–495; these read LELK…VGRK and LNLP…VGKQ. 37–44 provides a ligand contact to ATP; sequence GENGAGKS.

The protein belongs to the ABC transporter superfamily. Ribose importer (TC 3.A.1.2.1) family. The complex is composed of an ATP-binding protein (RbsA), two transmembrane proteins (RbsC) and a solute-binding protein (RbsB).

It is found in the cell inner membrane. The catalysed reaction is D-ribose(out) + ATP + H2O = D-ribose(in) + ADP + phosphate + H(+). Its function is as follows. Part of the ABC transporter complex RbsABC involved in ribose import. Responsible for energy coupling to the transport system. In Photorhabdus laumondii subsp. laumondii (strain DSM 15139 / CIP 105565 / TT01) (Photorhabdus luminescens subsp. laumondii), this protein is Ribose import ATP-binding protein RbsA.